The primary structure comprises 130 residues: Small ribosomal subunit protein uS8 (130 aa).

This sequence belongs to the universal ribosomal protein uS8 family.

This is Small ribosomal subunit protein uS8 (RPS22) from Kluyveromyces marxianus (Yeast).